We begin with the raw amino-acid sequence, 497 residues long: Probable pectinesterase 30 (497 aa).

The first 21 residues, 1-21 (MLVKVFSFFILMIIMVIGVSK), serve as a signal peptide directing secretion. 2 N-linked (GlcNAc...) asparagine glycosylation sites follow: Asn238 and Asn254. Residue Thr263 coordinates substrate. The active-site Proton donor is the Asp316. A disulfide bridge links Cys330 with Cys350. The active-site Nucleophile is the Asp337. A glycan (N-linked (GlcNAc...) asparagine) is linked at Asn385. The substrate site is built by Arg403 and Trp405.

It belongs to the pectinesterase family. As to expression, expressed in siliques.

The protein localises to the secreted. It localises to the cell wall. The catalysed reaction is [(1-&gt;4)-alpha-D-galacturonosyl methyl ester](n) + n H2O = [(1-&gt;4)-alpha-D-galacturonosyl](n) + n methanol + n H(+). It participates in glycan metabolism; pectin degradation; 2-dehydro-3-deoxy-D-gluconate from pectin: step 1/5. In terms of biological role, acts in the modification of cell walls via demethylesterification of cell wall pectin. The sequence is that of Probable pectinesterase 30 (PME30) from Arabidopsis thaliana (Mouse-ear cress).